The sequence spans 650 residues: Sodium-dependent phosphate transporter 2 (650 aa).

At 1–5 (MAMDG) the chain is on the extracellular side. The helical transmembrane segment at 6-26 (YLWMVILGFIIAFILAFSVGA) threads the bilayer. The Cytoplasmic segment spans residues 27 to 46 (NDVANSFGTAVGSGVVTLRQ). The helical transmembrane segment at 47–67 (ACILASIFETTGSVLLGAKVG) threads the bilayer. Topologically, residues 68–83 (ETIRKGIIDVNLYNDT) are extracellular. An N-linked (GlcNAc...) asparagine glycan is attached at asparagine 81. The chain crosses the membrane as a helical span at residues 84–104 (VVTLMAGEVSAMVGSAVWQLI). The Cytoplasmic segment spans residues 105-109 (ASFLR). Residues 110 to 130 (LPISGTHCIVGSTIGFSLVAN) traverse the membrane as a helical segment. The Extracellular portion of the chain corresponds to 131 to 142 (GTKGVQWMELVK). The helical transmembrane segment at 143–163 (IVASWFISPLLSGFMSGVLFV) threads the bilayer. The Cytoplasmic segment spans residues 164–192 (LIRMFILTKEDPVPNGLQALPLFYAATIA). The chain crosses the membrane as a helical span at residues 193 to 212 (INVFSIMYTGAPVLGLSLPI). Tryptophan 213 is a topological domain (extracellular). Residues 214-234 (AIALISFGVALLFAFFVWLFV) traverse the membrane as a helical segment. Residues 235 to 482 (CPWMRRKIAG…EEKEEKDTAE (248 aa)) lie on the Cytoplasmic side of the membrane. Residues serine 253, serine 256, serine 259, serine 268, serine 315, and serine 384 each carry the phosphoserine modification. Positions 268–310 (SPFKELPGAKASDDSAVPLTNPTGEAVGPSEGTSTGNHPRTAY) are disordered. Residues 483–503 (VHLLFHFLQVLTACFGSFAHG) form a helical membrane-spanning segment. Residues 504–530 (GNDVSNAIGPLVALWLIYEQGGVMQEA) lie on the Extracellular side of the membrane. A helical transmembrane segment spans residues 531-551 (ATPVWLLFYGGVGICTGLWVW). Topologically, residues 552 to 571 (GRRVIQTMGKDLTPITPSSG) are cytoplasmic. Residues 572-586 (FTIELASAFTVVIAS) form a helical membrane-spanning segment. Topologically, residues 587-593 (NIGLPVS) are extracellular. A helical membrane pass occupies residues 594-609 (TTHCKVGSVVAVGWIR). The Cytoplasmic portion of the chain corresponds to 610–621 (SRKAVDWHLFRN). The helical transmembrane segment at 622–642 (IFVAWFVTVPVAGLFSAAIMA) threads the bilayer. The Extracellular portion of the chain corresponds to 643–650 (IFMYGILS).

Belongs to the inorganic phosphate transporter (PiT) (TC 2.A.20) family. Homodimer.

It localises to the cell membrane. Its subcellular location is the apical cell membrane. It carries out the reaction 2 Na(+)(out) + phosphate(out) = 2 Na(+)(in) + phosphate(in). Its function is as follows. Sodium-phosphate symporter which preferentially transports the monovalent form of phosphate with a stoichiometry of two sodium ions per phosphate ion. Plays a critical role in the determination of bone quality and strength by providing phosphate for bone mineralization. Required to maintain normal cerebrospinal fluid phosphate levels. Mediates phosphate-induced calcification of vascular smooth muscle cells (VCMCs) and can functionally compensate for loss of SLC20A1 in VCMCs. In terms of biological role, (Microbial infection) Functions as a retroviral receptor and confers hamster cells susceptibility to infection to Gibbon Ape Leukemia Virus (GaLV) and amphotropic murine leukemia virus (A-MuLV). In Cricetulus griseus (Chinese hamster), this protein is Sodium-dependent phosphate transporter 2 (SLC20A2).